Here is a 299-residue protein sequence, read N- to C-terminus: Taste receptor type 2 member 19 (299 aa).

Position 1 (M1) is a topological domain, extracellular. The chain crosses the membrane as a helical span at residues 2-22 (MCFLLIISSILVVFAFVLGNV). Residues 23-55 (ANGFIALVNVIDWVNTRKISSAEQILTALVVSR) lie on the Cytoplasmic side of the membrane. A helical transmembrane segment spans residues 56 to 76 (IGLLWVMLFLWYATVFNSALY). Residues 77 to 87 (GLEVRIVASNA) are Extracellular-facing. A helical transmembrane segment spans residues 88–108 (WAVTNHFSMWLAASLSIFCLL). The Cytoplasmic portion of the chain corresponds to 109–127 (KIANFSNLISLHLKKRIKS). Residues 128–148 (VVLVILLGPLVFLICNLAVIT) traverse the membrane as a helical segment. Residues 149-181 (MDERVWTKEYEGNVTWKIKLRNAIHLSSLTVTT) lie on the Extracellular side of the membrane. The N-linked (GlcNAc...) asparagine glycan is linked to N161. The helical transmembrane segment at 182–202 (LANLIPFTLSLICFLLLICSL) threads the bilayer. Residues 203–226 (CKHLKKMRLHSKGSQDPSTKVHIK) are Cytoplasmic-facing. Residues 227-247 (ALQTVTSFLMLFAIYFLCIIT) form a helical membrane-spanning segment. The Extracellular portion of the chain corresponds to 248-259 (STWNLRTQQSKL). A helical membrane pass occupies residues 260-280 (VLLLCQTVAIMYPSFHSFILI). Over 281-299 (MGSRKLKQTFLSVLWQMTR) the chain is Cytoplasmic.

The protein belongs to the G-protein coupled receptor T2R family. Expressed in subsets of taste receptor cells of the tongue and exclusively in gustducin-positive cells.

Its subcellular location is the membrane. Functionally, receptor that may play a role in the perception of bitterness and is gustducin-linked. May play a role in sensing the chemical composition of the gastrointestinal content. The activity of this receptor may stimulate alpha gustducin, mediate PLC-beta-2 activation and lead to the gating of TRPM5. The chain is Taste receptor type 2 member 19 (TAS2R19) from Homo sapiens (Human).